The sequence spans 258 residues: Type III pantothenate kinase (258 aa).

Position 6–13 (6–13 (DVGNTNTV)) interacts with ATP. Residues Y100 and 107–110 (GADR) each bind substrate. Residue D109 is the Proton acceptor of the active site. D129 contacts K(+). Residue T132 participates in ATP binding. T184 provides a ligand contact to substrate.

This sequence belongs to the type III pantothenate kinase family. As to quaternary structure, homodimer. Requires NH4(+) as cofactor. It depends on K(+) as a cofactor.

The protein localises to the cytoplasm. The catalysed reaction is (R)-pantothenate + ATP = (R)-4'-phosphopantothenate + ADP + H(+). It functions in the pathway cofactor biosynthesis; coenzyme A biosynthesis; CoA from (R)-pantothenate: step 1/5. Its function is as follows. Catalyzes the phosphorylation of pantothenate (Pan), the first step in CoA biosynthesis. This Geobacillus thermodenitrificans (strain NG80-2) protein is Type III pantothenate kinase.